A 115-amino-acid chain; its full sequence is NADH-ubiquinone oxidoreductase chain 3 (115 aa).

3 helical membrane-spanning segments follow: residues 3–23 (VMLT…IAFW), 55–75 (FFLV…LLPL), and 84–104 (LTTM…SLAY).

Belongs to the complex I subunit 3 family. Core subunit of respiratory chain NADH dehydrogenase (Complex I) which is composed of 45 different subunits. Interacts with TMEM186. Interacts with TMEM242.

Its subcellular location is the mitochondrion inner membrane. The catalysed reaction is a ubiquinone + NADH + 5 H(+)(in) = a ubiquinol + NAD(+) + 4 H(+)(out). Core subunit of the mitochondrial membrane respiratory chain NADH dehydrogenase (Complex I) which catalyzes electron transfer from NADH through the respiratory chain, using ubiquinone as an electron acceptor. Essential for the catalytic activity of complex I. This chain is NADH-ubiquinone oxidoreductase chain 3, found in Canis lupus familiaris (Dog).